The following is a 241-amino-acid chain: Small ribosomal subunit protein uS2 (241 aa).

The protein belongs to the universal ribosomal protein uS2 family.

The chain is Small ribosomal subunit protein uS2 from Proteus mirabilis (strain HI4320).